The following is a 95-amino-acid chain: MSVSKKDVEYVAELARLSFSEEQKEGFMEDLNSILGYVDKLSELDTDNVDIIVNPYYIENKFREDEVEESMDLKDVIKNAPKNLEEYIVVPKIID.

It belongs to the GatC family. In terms of assembly, heterotrimer of A, B and C subunits.

It catalyses the reaction L-glutamyl-tRNA(Gln) + L-glutamine + ATP + H2O = L-glutaminyl-tRNA(Gln) + L-glutamate + ADP + phosphate + H(+). The enzyme catalyses L-aspartyl-tRNA(Asn) + L-glutamine + ATP + H2O = L-asparaginyl-tRNA(Asn) + L-glutamate + ADP + phosphate + 2 H(+). Its function is as follows. Allows the formation of correctly charged Asn-tRNA(Asn) or Gln-tRNA(Gln) through the transamidation of misacylated Asp-tRNA(Asn) or Glu-tRNA(Gln) in organisms which lack either or both of asparaginyl-tRNA or glutaminyl-tRNA synthetases. The reaction takes place in the presence of glutamine and ATP through an activated phospho-Asp-tRNA(Asn) or phospho-Glu-tRNA(Gln). This Clostridium acetobutylicum (strain ATCC 824 / DSM 792 / JCM 1419 / IAM 19013 / LMG 5710 / NBRC 13948 / NRRL B-527 / VKM B-1787 / 2291 / W) protein is Glutamyl-tRNA(Gln) amidotransferase subunit C 1 (gatC1).